Here is a 318-residue protein sequence, read N- to C-terminus: Thymidylate synthase (318 aa).

DUMP is bound by residues Arg-25 and 180–181 (RR). Cys-200 acts as the Nucleophile in catalysis. DUMP contacts are provided by residues 220-223 (RSGD), Asn-231, and 261-263 (HIY). Asp-223 is a binding site for (6R)-5,10-methylene-5,6,7,8-tetrahydrofolate. Ala-317 serves as a coordination point for (6R)-5,10-methylene-5,6,7,8-tetrahydrofolate.

This sequence belongs to the thymidylate synthase family. Bacterial-type ThyA subfamily. As to quaternary structure, homodimer.

It is found in the cytoplasm. The catalysed reaction is dUMP + (6R)-5,10-methylene-5,6,7,8-tetrahydrofolate = 7,8-dihydrofolate + dTMP. It functions in the pathway pyrimidine metabolism; dTTP biosynthesis. Catalyzes the reductive methylation of 2'-deoxyuridine-5'-monophosphate (dUMP) to 2'-deoxythymidine-5'-monophosphate (dTMP) while utilizing 5,10-methylenetetrahydrofolate (mTHF) as the methyl donor and reductant in the reaction, yielding dihydrofolate (DHF) as a by-product. This enzymatic reaction provides an intracellular de novo source of dTMP, an essential precursor for DNA biosynthesis. In Lactobacillus delbrueckii subsp. bulgaricus (strain ATCC BAA-365 / Lb-18), this protein is Thymidylate synthase.